We begin with the raw amino-acid sequence, 369 residues long: 4-hydroxy-3-methylbut-2-en-1-yl diphosphate synthase (flavodoxin) (369 aa).

[4Fe-4S] cluster-binding residues include C270, C273, C305, and E312.

This sequence belongs to the IspG family. It depends on [4Fe-4S] cluster as a cofactor.

It carries out the reaction (2E)-4-hydroxy-3-methylbut-2-enyl diphosphate + oxidized [flavodoxin] + H2O + 2 H(+) = 2-C-methyl-D-erythritol 2,4-cyclic diphosphate + reduced [flavodoxin]. The protein operates within isoprenoid biosynthesis; isopentenyl diphosphate biosynthesis via DXP pathway; isopentenyl diphosphate from 1-deoxy-D-xylulose 5-phosphate: step 5/6. Converts 2C-methyl-D-erythritol 2,4-cyclodiphosphate (ME-2,4cPP) into 1-hydroxy-2-methyl-2-(E)-butenyl 4-diphosphate. The sequence is that of 4-hydroxy-3-methylbut-2-en-1-yl diphosphate synthase (flavodoxin) from Pseudomonas putida (strain W619).